A 379-amino-acid chain; its full sequence is Cyclic dinucleotide synthase CdnE (379 aa).

Residues glutamine 107, serine 109, aspartate 123, and lysine 179 each contribute to the UTP site. Mg(2+) is bound at residue aspartate 123. Aspartate 193 lines the Mg(2+) pocket. UTP contacts are provided by asparagine 229, lysine 257, and serine 274. Residues 328-330 (KIF) carry the Pyrimidine specificity motif (R/Q)xW in donor pocket motif.

It belongs to the CD-NTase family. E02 subfamily. Mg(2+) serves as cofactor.

The catalysed reaction is 2 UTP = c-di-UMP + 2 diphosphate. The enzyme catalyses UTP + ATP = 3',3'-cUAMP + 2 diphosphate. It catalyses the reaction UTP + CTP = cyclic CMP-UMP + 2 diphosphate. Functionally, cyclic nucleotide synthase (second messenger synthase) of a CBASS antivirus system. CBASS (cyclic oligonucleotide-based antiphage signaling system) provides immunity against bacteriophage. The CD-NTase protein synthesizes cyclic nucleotides in response to infection; these serve as specific second messenger signals. The signals activate a diverse range of effectors, leading to bacterial cell death and thus abortive phage infection. The effector protein for this system is membrane protein Cap15. A type I-B(UU) CBASS system. Cyclic dinucleotide synthase that preferentially catalyzes the synthesis of 3',3'-cyclic UMP-UMP (c-di-UMP) and 3',3'-cyclic UMP-AMP, with minor amounts of 3',3'-cyclic UMP-CMP, which are second messengers for cell signal transduction. In terms of biological role, protects E.coli against phage infection. When the CBASS operon (cap15-cdnE) is introduced in E.coli MG1655 it protects against phages T2, T4, T5, T6, SECPhi4, SECPhi6, SECPhi17, SECPhi18 and SECPhi27, but not against phage T7. This chain is Cyclic dinucleotide synthase CdnE, found in Yersinia aleksiciae.